The chain runs to 73 residues: uncharacterized protein (73 aa).

A signal peptide spans 1 to 30 (MVDFYFIEEKVAYRAAFTTTGKIAATLGLA).

This is an uncharacterized protein from Archaeoglobus fulgidus (strain ATCC 49558 / DSM 4304 / JCM 9628 / NBRC 100126 / VC-16).